We begin with the raw amino-acid sequence, 380 residues long: Methylthioribose-1-phosphate isomerase (380 aa).

Asp-257 serves as the catalytic Proton donor.

Belongs to the eIF-2B alpha/beta/delta subunits family. MtnA subfamily.

It localises to the cytoplasm. It is found in the nucleus. It catalyses the reaction 5-(methylsulfanyl)-alpha-D-ribose 1-phosphate = 5-(methylsulfanyl)-D-ribulose 1-phosphate. It functions in the pathway amino-acid biosynthesis; L-methionine biosynthesis via salvage pathway; L-methionine from S-methyl-5-thio-alpha-D-ribose 1-phosphate: step 1/6. In terms of biological role, catalyzes the interconversion of methylthioribose-1-phosphate (MTR-1-P) into methylthioribulose-1-phosphate (MTRu-1-P). This is Methylthioribose-1-phosphate isomerase from Naegleria gruberi (Amoeba).